Reading from the N-terminus, the 923-residue chain is DNA mismatch repair protein MutS (923 aa).

671–678 (GPNMAGKS) contacts ATP.

The protein belongs to the DNA mismatch repair MutS family.

Functionally, this protein is involved in the repair of mismatches in DNA. It is possible that it carries out the mismatch recognition step. This protein has a weak ATPase activity. The chain is DNA mismatch repair protein MutS from Rhodopseudomonas palustris (strain BisB5).